Here is a 320-residue protein sequence, read N- to C-terminus: Putative polysaccharide deacetylase (320 aa).

Residues 69–303 (RSIESCFEYG…ITSKEGVWVA (235 aa)) form the NodB homology domain.

It belongs to the polysaccharide deacetylase family. Homodimer.

Its subcellular location is the prospore. In terms of biological role, may deacetylate chitin. Required for spore formation. The polypeptide is Putative polysaccharide deacetylase (Schizosaccharomyces pombe (strain 972 / ATCC 24843) (Fission yeast)).